The following is a 125-amino-acid chain: MRIAGVNLPLNKHAVIALTHVYGIGKTSAKSILQRAGIAPERKISELNDEEAHAIREIIAEDYKVEGQARGEQQLAVKRLMDIGCYRGLRHRRSLPVRGQRTQTNARTRKGKRKTVAGKKKATKK.

The disordered stretch occupies residues 92–125; the sequence is RRSLPVRGQRTQTNARTRKGKRKTVAGKKKATKK. Residues 107–125 show a composition bias toward basic residues; sequence RTRKGKRKTVAGKKKATKK.

Belongs to the universal ribosomal protein uS13 family. In terms of assembly, part of the 30S ribosomal subunit. Forms a loose heterodimer with protein S19. Forms two bridges to the 50S subunit in the 70S ribosome.

Located at the top of the head of the 30S subunit, it contacts several helices of the 16S rRNA. In the 70S ribosome it contacts the 23S rRNA (bridge B1a) and protein L5 of the 50S subunit (bridge B1b), connecting the 2 subunits; these bridges are implicated in subunit movement. Contacts the tRNAs in the A and P-sites. The polypeptide is Small ribosomal subunit protein uS13 (Chlorobium phaeobacteroides (strain DSM 266 / SMG 266 / 2430)).